Reading from the N-terminus, the 603-residue chain is NADH-ubiquinone oxidoreductase chain 5 (603 aa).

14 helical membrane passes run 4–24 (YTSI…ATLV), 36–56 (VKTT…LYIF), 87–107 (MMFI…SLWY), 122–142 (LIFL…QLFI), 171–191 (AVLY…WFLL), 211–233 (LPLM…HPWL), 241–261 (TPVS…FLLI), 272–292 (LTQN…AMCA), 301–320 (IVAF…IGIN), 325–347 (AFLH…GSII), 370–390 (STSL…TGFY), 406–422 (AWAL…TSAY), 488–508 (LLAL…TLMT), and 583–603 (MIKL…LLMV).

The protein belongs to the complex I subunit 5 family. As to quaternary structure, core subunit of respiratory chain NADH dehydrogenase (Complex I) which is composed of 45 different subunits.

Its subcellular location is the mitochondrion inner membrane. It carries out the reaction a ubiquinone + NADH + 5 H(+)(in) = a ubiquinol + NAD(+) + 4 H(+)(out). Functionally, core subunit of the mitochondrial membrane respiratory chain NADH dehydrogenase (Complex I) which catalyzes electron transfer from NADH through the respiratory chain, using ubiquinone as an electron acceptor. Essential for the catalytic activity and assembly of complex I. The protein is NADH-ubiquinone oxidoreductase chain 5 (MT-ND5) of Papio hamadryas (Hamadryas baboon).